The chain runs to 669 residues: Small ribosomal subunit protein mS39 (669 aa).

The transit peptide at 1-13 directs the protein to the mitochondrion; it reads MAAPCVRLGSVRC. 11 PPR repeats span residues 129–163, 164–199, 209–239, 240–274, 275–314, 315–351, 352–392, 396–430, 438–472, 473–507, and 556–590; these read IEGVSEEALKERIQLRRIKESIDLFDQLLQGGTAP, SLETTNRLLDLICFYGDREPTRDIQTSEQNQQDDQD, RPGQYRKASEILGSWRENNNAERIFNLMPER, NAHSFCTLIQGMVKYGSSNKAFNTYTDLMNNRLTA, DVQTFNALILAAPDMKEKYNEKWDLIVELLKHMVQQNVRP, NLLTFNSVLKSLRKCGTMARGLALQTINEMKALNIEP, SLGT…FTLR, DVYFFTNAMRVCLDLKDIELAYRLHALQQTADNRG, QSTYYGRFFNLLCMMENIDVILKWYRELIPSLYYP, NSRGMLDLLQALDMDNCLDLIPQIWKDIKQIGHSN, and SSASLGNISVLLARAGRTEEAWKMLQRFKTNHRVP. The interval 186-218 is disordered; the sequence is DIQTSEQNQQDDQDQQETEDSKKRPGQYRKASE. Residues 194–203 show a composition bias toward acidic residues; it reads QQDDQDQQET. The tract at residues 648 to 669 is disordered; it reads EDLQKSHSSSSSSSESSDSDRE. Low complexity predominate over residues 653 to 663; sequence SHSSSSSSSES.

It belongs to the mitochondrion-specific ribosomal protein mS39 family.

It is found in the mitochondrion. Mitochondrial protein that may have a role in mitochondrial translation. The sequence is that of Small ribosomal subunit protein mS39 (ptcd3) from Xenopus laevis (African clawed frog).